A 71-amino-acid polypeptide reads, in one-letter code: Phosphatidylinositol N-acetylglucosaminyltransferase subunit Y (71 aa).

The Cytoplasmic segment spans residues 1–3; it reads MFL. Residues 4 to 26 form a helical membrane-spanning segment; that stretch reads SLPMLTVLIPLVSLAGLFYSASV. Over 27-44 the chain is Lumenal; that stretch reads EDDFPQGCTSTTSLCFYS. A helical transmembrane segment spans residues 45–65; that stretch reads LLLPITIPVYVFFHLWTWMGI. The Cytoplasmic segment spans residues 66 to 71; the sequence is KLFRHN.

Component of the glycosylphosphatidylinositol-N-acetylglucosaminyltransferase (GPI-GnT) complex composed at least by PIGA, PIGC, PIGH, PIGP, PIGQ, PIGY and DPM2. Interacts directly with PIGA; this interaction regulates glycosylphosphatidylinositol-N-acetylglucosaminyltransferase activity. Does not interact with Ras proteins.

It is found in the endoplasmic reticulum membrane. It participates in glycolipid biosynthesis; glycosylphosphatidylinositol-anchor biosynthesis. In terms of biological role, part of the glycosylphosphatidylinositol-N-acetylglucosaminyltransferase (GPI-GnT) complex that catalyzes the transfer of N-acetylglucosamine from UDP-N-acetylglucosamine to phosphatidylinositol and participates in the first step of GPI biosynthesis. May act by regulating the catalytic subunit PIGA. The chain is Phosphatidylinositol N-acetylglucosaminyltransferase subunit Y from Bos taurus (Bovine).